The chain runs to 343 residues: Inositol 2-dehydrogenase (343 aa).

This sequence belongs to the Gfo/Idh/MocA family. In terms of assembly, homotetramer.

It catalyses the reaction myo-inositol + NAD(+) = scyllo-inosose + NADH + H(+). Functionally, involved in the oxidation of myo-inositol (MI) to 2-keto-myo-inositol (2KMI or 2-inosose). The protein is Inositol 2-dehydrogenase of Streptomyces avermitilis (strain ATCC 31267 / DSM 46492 / JCM 5070 / NBRC 14893 / NCIMB 12804 / NRRL 8165 / MA-4680).